A 122-amino-acid chain; its full sequence is Large ribosomal subunit protein bL12 (122 aa).

Belongs to the bacterial ribosomal protein bL12 family. In terms of assembly, homodimer. Part of the ribosomal stalk of the 50S ribosomal subunit. Forms a multimeric L10(L12)X complex, where L10 forms an elongated spine to which 2 to 4 L12 dimers bind in a sequential fashion. Binds GTP-bound translation factors.

Forms part of the ribosomal stalk which helps the ribosome interact with GTP-bound translation factors. Is thus essential for accurate translation. The sequence is that of Large ribosomal subunit protein bL12 from Dichelobacter nodosus (strain VCS1703A).